The following is a 714-amino-acid chain: T-cell activation Rho GTPase-activating protein (714 aa).

The region spanning 88–277 (QPLSIICGEN…FLIDNCFEIF (190 aa)) is the Rho-GAP domain. Disordered regions lie at residues 290–357 (DDSL…ESSV), 370–419 (QDRR…AEDP), 451–508 (QGHI…HSMS), 520–563 (RTSS…QSQT), and 623–650 (KPST…HRLS). Residues 299-311 (SDVSTLQNDSAYD) show a composition bias toward polar residues. A Phosphoserine modification is found at Ser-398. Residues 459-471 (SRSSPGESLGSSP) are compositionally biased toward low complexity. Composition is skewed to basic and acidic residues over residues 492–501 (KTDKTKPQRE) and 527–545 (EKSK…RKES).

As to expression, highly expressed in testis.

In terms of biological role, may function as a GTPase-activating protein. May play a role in transmission ratio distortion (TRD) in mouse, in which heterozygous males for t-locus transmit their t-carrying chromosome to 95% or more of their offspring. This chain is T-cell activation Rho GTPase-activating protein (Tagap), found in Mus musculus (Mouse).